Consider the following 276-residue polypeptide: N-alpha-acetyltransferase 60 (276 aa).

The region spanning 34–239 (VQLRFLVPDD…WTLLDHIKHY (206 aa)) is the N-acetyltransferase domain. Tyr59 lines the substrate pocket. The active site involves Tyr139. Leu141 is a substrate binding site. Residues 143 to 145 (LGV) and 151 to 156 (RNGIGS) each bind acetyl-CoA. His180 is a catalytic residue. Acetyl-CoA contacts are provided by residues Asn185 and 192–195 (YEKR). The tract at residues 204–215 (PYYYNIRGKGKD) is required for homodimerization. Tyr207 lines the substrate pocket.

Belongs to the acetyltransferase family. NAA60 subfamily.

The catalysed reaction is N-terminal L-methionyl-[transmembrane protein] + acetyl-CoA = N-terminal N(alpha)-acetyl-L-methionyl-[transmembrane protein] + CoA + H(+). It catalyses the reaction L-lysyl-[protein] + acetyl-CoA = N(6)-acetyl-L-lysyl-[protein] + CoA + H(+). Its function is as follows. Displays alpha (N-terminal) acetyltransferase activity towards a range of N-terminal sequences including those starting with Met-Lys, Met-Val, Met-Ala and Met-Met. Required for normal chromosomal segregation during anaphase. Functionally, shows histone acetyltransferase activity toward free histones. Does not show histone acetyltransferase activity toward free histones. The protein is N-alpha-acetyltransferase 60 of Drosophila melanogaster (Fruit fly).